A 466-amino-acid polypeptide reads, in one-letter code: uncharacterized protein (466 aa).

Positions 1 to 22 (MKKNNERVNTNPSLISKSYNMK) are disordered. The segment covering 7–19 (RVNTNPSLISKSY) has biased composition (polar residues). Phosphoserine is present on residues Ser-40 and Ser-42. An RRM domain is found at 108–183 (YFVHMDNISP…RLISATITNH (76 aa)). The interval 186–207 (RLPNAEHLESSTKTKDESQDKD) is disordered. The span at 188 to 207 (PNAEHLESSTKTKDESQDKD) shows a compositional bias: basic and acidic residues. The 160-residue stretch at 209-368 (LTKLDRAKLE…RAWRNFSGNT (160 aa)) folds into the CID domain. A Phosphoserine modification is found at Ser-371. Low complexity predominate over residues 425–436 (STETSSSSSPQP). The interval 425-448 (STETSSSSSPQPTEERKAKFKPSF) is disordered.

The protein localises to the nucleus. It is found in the cytoplasm. This is an uncharacterized protein from Schizosaccharomyces pombe (strain 972 / ATCC 24843) (Fission yeast).